The sequence spans 446 residues: Phosphoglucosamine mutase (446 aa).

The active-site Phosphoserine intermediate is Ser100. The Mg(2+) site is built by Ser100, Asp239, Asp241, and Asp243. Phosphoserine is present on Ser100.

Belongs to the phosphohexose mutase family. Requires Mg(2+) as cofactor. Post-translationally, activated by phosphorylation.

The enzyme catalyses alpha-D-glucosamine 1-phosphate = D-glucosamine 6-phosphate. In terms of biological role, catalyzes the conversion of glucosamine-6-phosphate to glucosamine-1-phosphate. The chain is Phosphoglucosamine mutase from Shouchella clausii (strain KSM-K16) (Alkalihalobacillus clausii).